The chain runs to 461 residues: GTPase Era, mitochondrial (461 aa).

Residues 1–35 constitute a mitochondrion transit peptide; sequence MAAPWLQRWRGAYAGPSGPLRLVRLHGVQRSSWRA. Residues 39–73 form a disordered region; sequence AAGAFGAGPHPGPPQRAANPGPGPHPPPVATSREK. One can recognise an Era-type G domain in the interval 89–354; it reads KVLRISIIGA…QYLLMQAKPG (266 aa). Residues 97–104 form a G1 region; it reads GAPNSGKS. Position 97–104 (97–104) interacts with GTP; it reads GAPNSGKS. A G2 region spans residues 123 to 127; sequence HTTRC. The interval 144 to 147 is G3; sequence DTPG. GTP is bound by residues 144 to 148 and 213 to 216; these read DTPGL and NKVD. The G4 stretch occupies residues 213 to 216; that stretch reads NKVD. A disordered region spans residues 260 to 319; sequence KVTQTPPPENRARESPCQLETDKAQEGSSLDNSSDVKASESSLDTEAREQKPYKYGDQKN. A compositionally biased stretch (basic and acidic residues) spans 269–284; sequence NRARESPCQLETDKAQ. Residues 285 to 303 are compositionally biased toward polar residues; that stretch reads EGSSLDNSSDVKASESSLD. Positions 304 to 319 are enriched in basic and acidic residues; it reads TEAREQKPYKYGDQKN. The tract at residues 332–334 is G5; sequence LAA. Residues 380–461 form the KH type-2 domain; the sequence is ILEYLPLEVP…RLKLKVEVKS (82 aa).

Belongs to the TRAFAC class TrmE-Era-EngA-EngB-Septin-like GTPase superfamily. Era GTPase family.

The protein resides in the mitochondrion matrix. It is found in the mitochondrion inner membrane. Functionally, probable GTPase that plays a role in the mitochondrial ribosomal small subunit assembly. Specifically binds the 12S mitochondrial rRNA (12S mt-rRNA) to a 33 nucleotide section delineating the 3' terminal stem-loop region. May act as a chaperone that protects the 12S mt-rRNA on the 28S mitoribosomal subunit during ribosomal small subunit assembly. The protein is GTPase Era, mitochondrial (ERAL1) of Gallus gallus (Chicken).